A 238-amino-acid polypeptide reads, in one-letter code: MGEPVYRRVVIKLSGEYFAGDQSFGIDQPTIDRIAGDLIAAQKLGVEIAVVVGGGNIFRGVEVSSRGVSRPTGDTMGMLATVMNCLALEAAIERRAVAARTLSAFVMPQVCELFTRGAAHRYLAEGKIVLLAGGTGNPFFTTDTTAVLRAGEIGAQAVLKATNVDGVYSADPKKDPSAQRFERLSHSQALEGGYKVMDATAFALARETSLPIIVFSIAEAGSIGAILSGTGRGTVVAG.

12–15 (KLSG) contributes to the ATP binding site. Gly54 is a binding site for UMP. ATP-binding residues include Gly55 and Arg59. UMP contacts are provided by residues Asp74 and 135-142 (TGNPFFTT). The ATP site is built by Thr162, Asn163, Tyr168, and Asp171.

The protein belongs to the UMP kinase family. In terms of assembly, homohexamer.

It localises to the cytoplasm. The enzyme catalyses UMP + ATP = UDP + ADP. It functions in the pathway pyrimidine metabolism; CTP biosynthesis via de novo pathway; UDP from UMP (UMPK route): step 1/1. Its activity is regulated as follows. Inhibited by UTP. Functionally, catalyzes the reversible phosphorylation of UMP to UDP. In Rhodopseudomonas palustris (strain BisB18), this protein is Uridylate kinase.